The chain runs to 262 residues: Putative non-heme bromoperoxidase BpoC (262 aa).

Substrate-binding positions include arginine 21, 87 to 88, and arginine 120; that span reads SM. Serine 87 is an active-site residue. Residues aspartate 211 and histidine 239 contribute to the active site. Substrate is bound at residue histidine 239.

It belongs to the AB hydrolase superfamily. As to quaternary structure, homodimer.

This chain is Putative non-heme bromoperoxidase BpoC (bpoC), found in Mycobacterium tuberculosis (strain CDC 1551 / Oshkosh).